Here is a 485-residue protein sequence, read N- to C-terminus: Subtilisin-like protease 1 (485 aa).

The N-terminal stretch at 1–19 (MGIFRFISISLAAVSAANA) is a signal peptide. A propeptide spanning residues 20–116 (GHILSMGHAK…VEPDTTITIH (97 aa)) is cleaved from the precursor. One can recognise an Inhibitor I9 domain in the interval 34–116 (SYIVVMKDGT…VEPDTTITIH (83 aa)). Residues 126–400 (SWGLARISSQ…NILINNGDAK (275 aa)) form the Peptidase S8 domain. Residues Asp-158 and His-190 each act as charge relay system in the active site. Asn-251 carries N-linked (GlcNAc...) asparagine glycosylation. Ser-345 functions as the Charge relay system in the catalytic mechanism. The span at 377-394 (GTSSVTNPGPGTRTNILI) shows a compositional bias: polar residues. The disordered stretch occupies residues 377–462 (GTSSVTNPGP…HTPFPNDDFN (86 aa)). Residues 409-418 (PSQPPKPSQP) are compositionally biased toward pro residues. Residues 419–428 (SKPQQPSEPQ) show a composition bias toward low complexity. Residues 433–455 (PQEPAPGQPAPAPAPVPQHPHTP) are compositionally biased toward pro residues.

This sequence belongs to the peptidase S8 family.

The protein localises to the secreted. Its function is as follows. Secreted subtilisin-like serine protease with keratinolytic activity that contributes to pathogenicity. In Arthroderma otae (Microsporum canis), this protein is Subtilisin-like protease 1 (SUB1).